Here is a 157-residue protein sequence, read N- to C-terminus: MTQPSCPCGSGDPLDDCCGRYHQGHPAPTAEALMRSRYSAYALGLVDYLRDTTLPAQQAGLDLDGIRAWSHGSTWLGLEVENHEVLGGQPEHARVTFVARWHDADGEHAHRECSGFVQRNGRWYFLDPTVALKLGRNDPCPCGAGGKLKKCCGPWIT.

Belongs to the UPF0225 family.

This is UPF0225 protein PA1039 from Pseudomonas aeruginosa (strain ATCC 15692 / DSM 22644 / CIP 104116 / JCM 14847 / LMG 12228 / 1C / PRS 101 / PAO1).